The primary structure comprises 239 residues: SKA complex subunit 1 (239 aa).

The interval 87 to 115 is disordered; that stretch reads PDSVPQKSTRPCLDDEKEGSSVVQPPESG. Residues 116–239 form a microtubule binding region; sequence NRHVQLISEQ…RCGPLTFYYA (124 aa).

Belongs to the SKA1 family. Component of the SKA complex, composed of two copies of ska-1 and a single copy of ska-3. The core complex associates with microtubules and may form dimeric assemblies. Interacts with ska-3 and microtubules.

The protein resides in the cytoplasm. The protein localises to the cytoskeleton. It localises to the spindle. It is found in the chromosome. Its subcellular location is the centromere. The protein resides in the kinetochore. In terms of biological role, component of the SKA complex, a microtubule plus end-binding complex of the outer kinetochore that stabilizes spindle microtubule-kinetochore attachments, promotes alignment of chromosomes at the mitotic spindle equator (chromosome congression) and assists suppression of the spindle assembly checkpoint. Kinetochores, consisting of a centromere-associated inner segment and a microtubule-contacting outer segment, play a crucial role in chromosome segregation by mediating the physical connection between centromeric DNA and spindle microtubules. The outer kinetochore is made up of the ten-subunit KMN network complex, comprising the MIS12, NDC80 and KNL1 complexes, and auxiliary microtubule-associated components such as the SKA complex; together they connect the outer kinetochore with the inner kinetochore, bind microtubules, and mediate interactions with mitotic checkpoint proteins that delay anaphase until chromosomes are bioriented on the spindle. The SKA complex is loaded onto bioriented kinetochores and it facilitates chromosome congression by stabilizing microtubules and end-on attachment of the NDC80 complex to depolymerizing spindle microtubules, thereby assisting the poleward-moving kinetochore in withstanding microtubule pulling forces. The complex associates with dynamic microtubule plus-ends and can track both depolymerizing and elongating microtubules. The complex recruits protein phosphatase 1 (PP1) to the kinetochore in prometaphase and metaphase, to oppose spindle assembly checkpoint signaling and promote the onset of anaphase. In the complex, it mediates interactions with microtubules. During meiosis the SKA complex stabilizes the meiotic spindle and is required for its migration to the cortex. The sequence is that of SKA complex subunit 1 from Caenorhabditis briggsae.